A 37-amino-acid polypeptide reads, in one-letter code: Diptericin (37 aa).

Residues 1-37 (DLHIPPPDNKINWPQLSGGGGGSPKTGYDININAQQK) form a disordered region.

Belongs to the attacin/sarcotoxin-2 family. In terms of tissue distribution, synthesized by the fat body and secreted into the hemolymph.

The protein localises to the secreted. Its function is as follows. Acute phase protein with antibacterial activity against the Gram-negative bacteria E.coli (MIC=6.25 ug/ml) and S.sonnei (MIC=12.5 ug/ml). Lacks antibacterial activity against the Gram-negative bacteria P.vulgaris, P.rettgeri and P.aeruginosa, and against the Gram-positive bacteria B.subtilis, S.aureus, M.luteus, B.megaterium, C.bovis and E.cloacae. This is Diptericin from Sarcophaga peregrina (Flesh fly).